The primary structure comprises 463 residues: Xanthine permease XanP (463 aa).

12 helical membrane passes run 43–63 (LLAM…ALGL), 71–91 (IISM…KAWG), 93–113 (VGSG…PLIM), 126–146 (PTMM…EMVI), 156–176 (IITP…LIQV), 192–212 (TFGA…IILL), 222–242 (VASL…MGML), 260–280 (LYYG…VFMI), 352–372 (GFVV…SGFV), 379–399 (VLGG…VRIV), 409–429 (ILII…PLIL), and 439–459 (LLSS…LIFP).

Belongs to the nucleobase:cation symporter-2 (NCS2) (TC 2.A.40) family.

The protein localises to the cell inner membrane. The catalysed reaction is xanthine(in) + H(+)(in) = xanthine(out) + H(+)(out). Specific, proton motive force-dependent high-affinity transporter for xanthine. The polypeptide is Xanthine permease XanP (xanP) (Escherichia coli O6:H1 (strain CFT073 / ATCC 700928 / UPEC)).